A 452-amino-acid polypeptide reads, in one-letter code: Adenylosuccinate synthetase (452 aa).

Residues 40 to 46 (GDEGKGK) and 68 to 70 (GHT) contribute to the GTP site. Residue Asp41 is the Proton acceptor of the active site. The Mg(2+) site is built by Asp41 and Gly68. IMP is bound by residues 41-44 (DEGK), 66-69 (NAGH), Thr158, Arg172, Asn250, Thr265, and Arg329. His69 acts as the Proton donor in catalysis. A substrate-binding site is contributed by 325–331 (VTTKRKR). Residues Arg331, 357 to 359 (KLD), and 440 to 442 (GVG) contribute to the GTP site.

The protein belongs to the adenylosuccinate synthetase family. In terms of assembly, homodimer. Mg(2+) is required as a cofactor.

The protein localises to the cytoplasm. It carries out the reaction IMP + L-aspartate + GTP = N(6)-(1,2-dicarboxyethyl)-AMP + GDP + phosphate + 2 H(+). The protein operates within purine metabolism; AMP biosynthesis via de novo pathway; AMP from IMP: step 1/2. Plays an important role in the de novo pathway and in the salvage pathway of purine nucleotide biosynthesis. Catalyzes the first committed step in the biosynthesis of AMP from IMP. The protein is Adenylosuccinate synthetase of Drosophila grimshawi (Hawaiian fruit fly).